The primary structure comprises 256 residues: Rano class II histocompatibility antigen, B alpha chain (256 aa).

The first 23 residues, 1–23 (MPLSRALILGVLALTTMLSPCGG), serve as a signal peptide directing secretion. An alpha-1 region spans residues 24-111 (QDDIEADHVG…KRSNSTPAVN (88 aa)). Residues 24-218 (QDDIEADHVG…IPAPMSELTE (195 aa)) are Extracellular-facing. Residues 108–206 (PAVNEVPEAT…LDEPVLRHWE (99 aa)) enclose the Ig-like C1-type domain. Residues 112 to 205 (EVPEATVFSK…SLDEPVLRHW (94 aa)) are alpha-2. A disulfide bridge connects residues C134 and C190. N145 is a glycosylation site (N-linked (GlcNAc...) asparagine). Positions 206–218 (EPEIPAPMSELTE) are connecting peptide. A helical transmembrane segment spans residues 219 to 244 (TVVCALGLSVGLVGIVVGTIFIIQGL). Residues 245–256 (RSVAPSRHPGPL) are Cytoplasmic-facing.

This sequence belongs to the MHC class II family.

It is found in the membrane. This is Rano class II histocompatibility antigen, B alpha chain (RT1-Ba) from Rattus norvegicus (Rat).